Consider the following 457-residue polypeptide: MALWGGRFTQAADQRFKQFNDSLRFDYRLAEQDIVGSVAWSKALVTVGVLTAEEQAQLEEALNVLLEDVRARPQQILESDAEDIHSWVEGKLIDKVGQLGKKLHTGRSRNDQVATDLKLWCKDTVSELLTANRQLQSALVETAQNNQDAVMPGYTHLQRAQPVTFAHWCLAYVEMLARDESRLQDALKRLDVSPLGCGALAGTAYEIDREQLAGWLGFASATRNSLDSVSDRDHVLELLSAAAIGMVHLSRFAEDLIFFNTGEAGFVELSDRVTSGSSLMPQKKNPDALELIRGKCGRVQGALTGMMMTLKGLPLAYNKDMQEDKEGLFDALDTWLDCLHMAALVLDGIQVKRPRCQEAAQQGYANATELADYLVAKGVPFREAHHIVGEAVVEAIRQGKPLEDLPLDELQKFSHVIGEDVYPILSLQSCLDKRAAKGGVSPQQVAQAIAFAQARLG.

Belongs to the lyase 1 family. Argininosuccinate lyase subfamily.

The protein resides in the cytoplasm. The enzyme catalyses 2-(N(omega)-L-arginino)succinate = fumarate + L-arginine. Its pathway is amino-acid biosynthesis; L-arginine biosynthesis; L-arginine from L-ornithine and carbamoyl phosphate: step 3/3. In Shigella boydii serotype 18 (strain CDC 3083-94 / BS512), this protein is Argininosuccinate lyase.